Here is a 541-residue protein sequence, read N- to C-terminus: Chaperonin GroEL (541 aa).

ATP is bound by residues Thr-30–Pro-33, Lys-51, Asp-87–Thr-91, Gly-415, Asn-479–Ala-481, and Asp-495.

The protein belongs to the chaperonin (HSP60) family. As to quaternary structure, forms a cylinder of 14 subunits composed of two heptameric rings stacked back-to-back. Interacts with the co-chaperonin GroES.

It is found in the cytoplasm. It catalyses the reaction ATP + H2O + a folded polypeptide = ADP + phosphate + an unfolded polypeptide.. Its function is as follows. Together with its co-chaperonin GroES, plays an essential role in assisting protein folding. The GroEL-GroES system forms a nano-cage that allows encapsulation of the non-native substrate proteins and provides a physical environment optimized to promote and accelerate protein folding. In Acinetobacter baumannii (strain SDF), this protein is Chaperonin GroEL.